Reading from the N-terminus, the 391-residue chain is Succinate--CoA ligase [ADP-forming] subunit beta (391 aa).

The region spanning 9-237 is the ATP-grasp domain; the sequence is RDLFEKHGVP…RATTDPLELR (229 aa). ATP is bound by residues K46, 53 to 55, A95, and E100; that span reads GRG. Residues N192 and D206 each contribute to the Mg(2+) site. Substrate-binding positions include N257 and 320 to 322; that span reads GIT.

This sequence belongs to the succinate/malate CoA ligase beta subunit family. As to quaternary structure, heterotetramer of two alpha and two beta subunits. Mg(2+) serves as cofactor.

It catalyses the reaction succinate + ATP + CoA = succinyl-CoA + ADP + phosphate. The catalysed reaction is GTP + succinate + CoA = succinyl-CoA + GDP + phosphate. Its pathway is carbohydrate metabolism; tricarboxylic acid cycle; succinate from succinyl-CoA (ligase route): step 1/1. Its function is as follows. Succinyl-CoA synthetase functions in the citric acid cycle (TCA), coupling the hydrolysis of succinyl-CoA to the synthesis of either ATP or GTP and thus represents the only step of substrate-level phosphorylation in the TCA. The beta subunit provides nucleotide specificity of the enzyme and binds the substrate succinate, while the binding sites for coenzyme A and phosphate are found in the alpha subunit. In Cutibacterium acnes (strain DSM 16379 / KPA171202) (Propionibacterium acnes), this protein is Succinate--CoA ligase [ADP-forming] subunit beta.